Consider the following 358-residue polypeptide: Nicotinate-nucleotide--dimethylbenzimidazole phosphoribosyltransferase (358 aa).

Glu313 serves as the catalytic Proton acceptor.

The protein belongs to the CobT family.

It carries out the reaction 5,6-dimethylbenzimidazole + nicotinate beta-D-ribonucleotide = alpha-ribazole 5'-phosphate + nicotinate + H(+). Its pathway is nucleoside biosynthesis; alpha-ribazole biosynthesis; alpha-ribazole from 5,6-dimethylbenzimidazole: step 1/2. Functionally, catalyzes the synthesis of alpha-ribazole-5'-phosphate from nicotinate mononucleotide (NAMN) and 5,6-dimethylbenzimidazole (DMB). This chain is Nicotinate-nucleotide--dimethylbenzimidazole phosphoribosyltransferase, found in Corynebacterium glutamicum (strain R).